The following is a 538-amino-acid chain: NAD(P)H-quinone oxidoreductase chain 4 (538 aa).

A run of 14 helical transmembrane segments spans residues phenylalanine 11–isoleucine 31, tyrosine 43–phenylalanine 63, methionine 95–valine 115, proline 119–valine 139, leucine 143–tryptophan 163, phenylalanine 175–phenylalanine 195, glycine 217–valine 237, threonine 251–leucine 271, phenylalanine 285–phenylalanine 305, isoleucine 314–serine 334, alanine 340–alanine 360, isoleucine 382–isoleucine 404, isoleucine 425–methionine 445, and isoleucine 472–methionine 492.

This sequence belongs to the complex I subunit 4 family.

The protein resides in the cellular thylakoid membrane. The enzyme catalyses a plastoquinone + NADH + (n+1) H(+)(in) = a plastoquinol + NAD(+) + n H(+)(out). It carries out the reaction a plastoquinone + NADPH + (n+1) H(+)(in) = a plastoquinol + NADP(+) + n H(+)(out). In terms of biological role, NDH-1 shuttles electrons from NAD(P)H, via FMN and iron-sulfur (Fe-S) centers, to quinones in the respiratory chain. The immediate electron acceptor for the enzyme in this species is believed to be plastoquinone. Couples the redox reaction to proton translocation (for every two electrons transferred, four hydrogen ions are translocated across the cytoplasmic membrane), and thus conserves the redox energy in a proton gradient. The polypeptide is NAD(P)H-quinone oxidoreductase chain 4 (Prochlorococcus marinus (strain NATL2A)).